The sequence spans 190 residues: Adenylate kinase (190 aa).

11-16 is an ATP binding site; it reads GSGKGT. Residues 31–60 form an NMP region; it reads STGDVLRGEMKAETELGKIAKDYIEKGQLV. AMP-binding positions include T32, R37, 58-60, 86-89, and Q93; these read QLV and GFPR. The tract at residues 127–137 is LID; the sequence is ERGKVSGRSDD. An ATP-binding site is contributed by R128. AMP-binding residues include R134 and R145. G173 contacts ATP.

The protein belongs to the adenylate kinase family. In terms of assembly, monomer.

The protein localises to the cytoplasm. It carries out the reaction AMP + ATP = 2 ADP. Its pathway is purine metabolism; AMP biosynthesis via salvage pathway; AMP from ADP: step 1/1. Its function is as follows. Catalyzes the reversible transfer of the terminal phosphate group between ATP and AMP. Plays an important role in cellular energy homeostasis and in adenine nucleotide metabolism. The chain is Adenylate kinase from Parabacteroides distasonis (strain ATCC 8503 / DSM 20701 / CIP 104284 / JCM 5825 / NCTC 11152).